The chain runs to 280 residues: DegV domain-containing protein CA_C1624 (280 aa).

A DegV domain is found at isoleucine 4–lysine 279. Residues threonine 60 and serine 93 each contribute to the hexadecanoate site.

Functionally, may bind long-chain fatty acids, such as palmitate, and may play a role in lipid transport or fatty acid metabolism. This chain is DegV domain-containing protein CA_C1624, found in Clostridium acetobutylicum (strain ATCC 824 / DSM 792 / JCM 1419 / IAM 19013 / LMG 5710 / NBRC 13948 / NRRL B-527 / VKM B-1787 / 2291 / W).